A 491-amino-acid chain; its full sequence is GTPase Der (491 aa).

The EngA-type G 1 domain occupies 3–166; the sequence is PVIALVGRPN…AALGIFPRDD (164 aa). GTP-binding positions include 9–16, 56–60, and 118–121; these read GRPNVGKS, DTGGI, and NKVD. The disordered stretch occupies residues 164-191; the sequence is RDDEGEEGEGEAEVVAEGEEPKRVPGPS. A compositionally biased stretch (acidic residues) spans 166–181; that stretch reads DEGEEGEGEAEVVAEG. Basic and acidic residues predominate over residues 182–191; sequence EEPKRVPGPS. Residues 196 to 369 enclose the EngA-type G 2 domain; it reads IKIAIIGRPN…SVQAAFQSAV (174 aa). GTP contacts are provided by residues 202 to 209, 249 to 253, and 314 to 317; these read GRPNVGKS, DTAGV, and NKWD. Residues 370–454 form the KH-like domain; that stretch reads TRWPTSRLTR…PIRIEYKGGD (85 aa). A compositionally biased stretch (basic and acidic residues) spans 452 to 464; the sequence is GGDNPYEGKKNSL. The segment at 452 to 491 is disordered; the sequence is GGDNPYEGKKNSLTERQVNKKRRLMSHHKKAEKKRRDKKR. Residues 470–491 show a composition bias toward basic residues; sequence NKKRRLMSHHKKAEKKRRDKKR.

Belongs to the TRAFAC class TrmE-Era-EngA-EngB-Septin-like GTPase superfamily. EngA (Der) GTPase family. In terms of assembly, associates with the 50S ribosomal subunit.

Functionally, GTPase that plays an essential role in the late steps of ribosome biogenesis. This is GTPase Der from Azotobacter vinelandii (strain DJ / ATCC BAA-1303).